Here is a 393-residue protein sequence, read N- to C-terminus: METFLFTSESVNEGHPDKLCDQISDAVLDACLEQDPDSKVACETCTKTNMVMVFGEITTKATVDYEKIVRDTCRSIGFISDDVGLDADKCKVLVNIEQQSPDIAQGVHGHFTKRPEDIGAGDQGHMFGYATDETPELMPLSHVLATKIGAKLTEVRKNGTCRWLRPDGKTQVTVEYYNDNGAMVPVRVHTVLISTQHDETVTNDEIARDLKEHVIKPIIPEKYLDDKTIFHLNPSGRFVIGGPHGDAGLTGRKIIIDTYGGWGAHGGGAFSGKDPTKVDRSGAYIVRQAAKSVVANGMARRALVQVSYAIGVPEPLSVFVDTYGTGLIPDKEILKIVKESFDFRPGMMTINLDLKRGGNGRFLKTAAYGHFGRDDPDFTWEVVKPLKWDKPQA.

Residue Glu-9 coordinates Mg(2+). Residue His-15 participates in ATP binding. Glu-43 is a K(+) binding site. L-methionine contacts are provided by Glu-56 and Gln-99. ATP is bound by residues 167–169 (DGK), 235–238 (SGRF), Asp-246, 252–253 (RK), Ala-269, Lys-273, and Lys-277. Position 246 (Asp-246) interacts with L-methionine. Lys-277 is a binding site for L-methionine.

The protein belongs to the AdoMet synthase family. As to quaternary structure, homotetramer. Mn(2+) is required as a cofactor. It depends on Mg(2+) as a cofactor. Requires Co(2+) as cofactor. The cofactor is K(+).

Its subcellular location is the cytoplasm. It carries out the reaction L-methionine + ATP + H2O = S-adenosyl-L-methionine + phosphate + diphosphate. The protein operates within amino-acid biosynthesis; S-adenosyl-L-methionine biosynthesis; S-adenosyl-L-methionine from L-methionine: step 1/1. In terms of biological role, catalyzes the formation of S-adenosylmethionine from methionine and ATP. The reaction comprises two steps that are both catalyzed by the same enzyme: formation of S-adenosylmethionine (AdoMet) and triphosphate, and subsequent hydrolysis of the triphosphate. This is S-adenosylmethionine synthase (SAMS) from Brassica rapa subsp. pekinensis (Chinese cabbage).